The primary structure comprises 874 residues: Valine--tRNA ligase (874 aa).

A 'HIGH' region motif is present at residues P46–H56. The short motif at K523 to S527 is the 'KMSKS' region element. K526 serves as a coordination point for ATP. Residues D805 to K874 adopt a coiled-coil conformation.

This sequence belongs to the class-I aminoacyl-tRNA synthetase family. ValS type 1 subfamily. As to quaternary structure, monomer.

Its subcellular location is the cytoplasm. It carries out the reaction tRNA(Val) + L-valine + ATP = L-valyl-tRNA(Val) + AMP + diphosphate. Catalyzes the attachment of valine to tRNA(Val). As ValRS can inadvertently accommodate and process structurally similar amino acids such as threonine, to avoid such errors, it has a 'posttransfer' editing activity that hydrolyzes mischarged Thr-tRNA(Val) in a tRNA-dependent manner. The chain is Valine--tRNA ligase from Ureaplasma parvum serovar 3 (strain ATCC 700970).